The sequence spans 283 residues: MTVGIVAQRDNDRAMSLASTLCDRLRATSAAVVVDETTAGALGDHDAWEAAVPDSAPVDEMSACNLVVSIGGDGTFLYAARGAGSTPILGVNLGEVGFLNAIAPEEAVETVVAEVEHIQKTGSARTRAKPRLQASGDNWELSPALNEVVVQGERRGHGGGATVDVYVDDSLYTSGHADGVLVATPTGSTAYNLSERGPLVHPDVAGLIITGMADEMGTPPLVVDVDSEIVVELTDADSGVVVSDGRVRKDVVPPERITVSRAGEPVRLAGPPLDFFTALDKLA.

Aspartate 73 acts as the Proton acceptor in catalysis. Residues 73–74 (DG), 146–147 (NE), histidine 157, histidine 176, aspartate 178, 189–194 (TAYNLS), and alanine 213 contribute to the NAD(+) site.

Belongs to the NAD kinase family. The cofactor is a divalent metal cation.

The protein resides in the cytoplasm. The enzyme catalyses NAD(+) + ATP = ADP + NADP(+) + H(+). Its function is as follows. Involved in the regulation of the intracellular balance of NAD and NADP, and is a key enzyme in the biosynthesis of NADP. Catalyzes specifically the phosphorylation on 2'-hydroxyl of the adenosine moiety of NAD to yield NADP. This chain is NAD kinase, found in Haloarcula marismortui (strain ATCC 43049 / DSM 3752 / JCM 8966 / VKM B-1809) (Halobacterium marismortui).